Consider the following 457-residue polypeptide: Autophagy-related protein 14 (457 aa).

Positions 31–109 (RIENVMALIE…TRRAALSRRK (79 aa)) form a coiled coil. Disordered stretches follow at residues 54–73 (ETNA…QRTA), 252–274 (PSQA…VSRP), and 433–457 (NKNL…VKNR). Positions 253–266 (SQASVSSPSSTTDT) are enriched in low complexity.

It belongs to the ATG14 family. In terms of assembly, component of the autophagy-specific VPS34 PI3-kinase complex I.

The protein localises to the preautophagosomal structure membrane. It is found in the vacuole membrane. Required for cytoplasm to vacuole transport (Cvt) and autophagy as a part of the autophagy-specific VPS34 PI3-kinase complex I. This complex is essential to recruit the ATG8-phosphatidylinositol conjugate and the ATG12-ATG5 conjugate to the pre-autophagosomal structure. ATG14 mediates the specific binding of the VPS34 PI3-kinase complex I to the preautophagosomal structure (PAS). Autophagy is required for proper vegetative growth, asexual/sexual reproduction, and full virulence. Autophagy is particularly involved in the biosynthesis of deoxynivalenol (DON), an important virulence determinant. This Gibberella zeae (strain ATCC MYA-4620 / CBS 123657 / FGSC 9075 / NRRL 31084 / PH-1) (Wheat head blight fungus) protein is Autophagy-related protein 14.